Reading from the N-terminus, the 196-residue chain is ATP-dependent Clp protease proteolytic subunit (196 aa).

Residue S98 is the Nucleophile of the active site. H123 is an active-site residue.

This sequence belongs to the peptidase S14 family. Fourteen ClpP subunits assemble into 2 heptameric rings which stack back to back to give a disk-like structure with a central cavity, resembling the structure of eukaryotic proteasomes.

The protein resides in the cytoplasm. It carries out the reaction Hydrolysis of proteins to small peptides in the presence of ATP and magnesium. alpha-casein is the usual test substrate. In the absence of ATP, only oligopeptides shorter than five residues are hydrolyzed (such as succinyl-Leu-Tyr-|-NHMec, and Leu-Tyr-Leu-|-Tyr-Trp, in which cleavage of the -Tyr-|-Leu- and -Tyr-|-Trp bonds also occurs).. Its function is as follows. Cleaves peptides in various proteins in a process that requires ATP hydrolysis. Has a chymotrypsin-like activity. Plays a major role in the degradation of misfolded proteins. This Geobacillus sp. (strain WCH70) protein is ATP-dependent Clp protease proteolytic subunit.